Consider the following 413-residue polypeptide: 2,3-bisphosphoglycerate-independent phosphoglycerate mutase (413 aa).

Belongs to the BPG-independent phosphoglycerate mutase family. A-PGAM subfamily.

It carries out the reaction (2R)-2-phosphoglycerate = (2R)-3-phosphoglycerate. It functions in the pathway carbohydrate degradation; glycolysis; pyruvate from D-glyceraldehyde 3-phosphate: step 3/5. Catalyzes the interconversion of 2-phosphoglycerate and 3-phosphoglycerate. The chain is 2,3-bisphosphoglycerate-independent phosphoglycerate mutase from Metallosphaera sedula (strain ATCC 51363 / DSM 5348 / JCM 9185 / NBRC 15509 / TH2).